A 375-amino-acid polypeptide reads, in one-letter code: B3 domain-containing protein REM-like 2 (375 aa).

3 consecutive DNA-binding regions (TF-B3) follow at residues 51–147, 131–226, and 277–375; these read SFVA…KRLY, FVTV…YGTN, and RLVI…KSGK.

The protein localises to the nucleus. The polypeptide is B3 domain-containing protein REM-like 2 (Arabidopsis thaliana (Mouse-ear cress)).